Reading from the N-terminus, the 506-residue chain is Protein MGF 505-9R (506 aa).

3 ANK repeats span residues 54–83 (SIHK…NLKY), 253–283 (QVDT…EIVE), and 313–343 (FVKK…KINL).

It belongs to the asfivirus MGF 505 family.

Plays a role in virus cell tropism, and may be required for efficient virus replication in macrophages. The polypeptide is Protein MGF 505-9R (African swine fever virus (isolate Tick/Malawi/Lil 20-1/1983) (ASFV)).